Consider the following 235-residue polypeptide: Large ribosomal subunit protein uL1 (235 aa).

This sequence belongs to the universal ribosomal protein uL1 family. As to quaternary structure, part of the 50S ribosomal subunit.

Its function is as follows. Binds directly to 23S rRNA. The L1 stalk is quite mobile in the ribosome, and is involved in E site tRNA release. In terms of biological role, protein L1 is also a translational repressor protein, it controls the translation of the L11 operon by binding to its mRNA. This Synechococcus sp. (strain CC9902) protein is Large ribosomal subunit protein uL1.